Here is a 236-residue protein sequence, read N- to C-terminus: tRNA (guanine-N(7)-)-methyltransferase (236 aa).

S-adenosyl-L-methionine contacts are provided by residues Gly-54, 77–78 (EI), 110–111 (NA), and Leu-130. Residue Asp-133 is part of the active site. 208–210 (TEE) contributes to the S-adenosyl-L-methionine binding site.

This sequence belongs to the class I-like SAM-binding methyltransferase superfamily. TrmB family.

Its subcellular location is the nucleus. The catalysed reaction is guanosine(46) in tRNA + S-adenosyl-L-methionine = N(7)-methylguanosine(46) in tRNA + S-adenosyl-L-homocysteine. The protein operates within tRNA modification; N(7)-methylguanine-tRNA biosynthesis. Catalyzes the formation of N(7)-methylguanine at position 46 (m7G46) in tRNA. The chain is tRNA (guanine-N(7)-)-methyltransferase from Bombyx mori (Silk moth).